The sequence spans 472 residues: Doublesex- and mab-3-related transcription factor 3 (472 aa).

A DNA-binding region (DM) is located at residues 29–76; it reads CARCRNHGVLSWLKGHKRYCRFKDCTCEKCILIIERQRVMAAQVALRR. Disordered regions lie at residues 89–128 and 155–191; these read DSLRALPGPPPPGDAVAAPQPPPASQPSQPQPPRPAAELA and EERLGDGKSADNTEVFSDKDTDQRSSPDVAKSKGCFT. Residues 95-123 are compositionally biased toward pro residues; it reads PGPPPPGDAVAAPQPPPASQPSQPQPPRP. Basic and acidic residues predominate over residues 155 to 179; the sequence is EERLGDGKSADNTEVFSDKDTDQRS. Positions 249–284 constitute a DMA domain; that stretch reads RPPLEVLKKIFPNQKPTVLELILKGCGGDLVSAVEV. The interval 430-472 is disordered; that stretch reads TEDPRISIPDDGCPFVSKQSIYTEDDYDERSDSSDSRTLNTSS.

Belongs to the DMRT family. May homodimerize. Expressed in testis.

It is found in the nucleus. Probable transcription factor that plays a role in configuring the spinal circuits controlling stride in vertebrates. Involved in neuronal specification within specific subdivision of spinal cord neurons and in the development of a coordinated locomotor network controlling limb movements. May regulate transcription during sexual development. This Homo sapiens (Human) protein is Doublesex- and mab-3-related transcription factor 3 (DMRT3).